The sequence spans 492 residues: Catalase isozyme B (492 aa).

Positions 1 to 20 (MDPYKHRPSSGSNSTFWTTN) are disordered. Over residues 9–20 (SSGSNSTFWTTN) the composition is skewed to polar residues. Arg62 contacts heme. Residue His65 is part of the active site. Arg102 contributes to the heme binding site. The active site involves Asn138. A heme-binding site is contributed by Phe151. Tyr210 bears the Phosphotyrosine mark. A cross-link (3-(S-cysteinyl)-tyrosine (Cys-Tyr)) is located at residues 325 to 348 (CPAIIVPGIHYSDDKLLQTRIFSY). Heme-binding residues include Arg344, Tyr348, and Arg355. A Peroxisome targeting signal motif is present at residues 484–492 (SRLNLKPNM).

The protein belongs to the catalase family. As to quaternary structure, homotetramer. Interacts with GLO1 and GLO4; these interactions are disturbed by alpha-hydroxy-2-pyridinemethanesulfonic acid (HPMS) and salicylic acid (SA). Interacts with STRK1 at the plasma membrane. Requires heme as cofactor. As to expression, predominantly expressed in roots and, at low levels, in leaves (e.g. sheaths). Detected in seeds. Also present in panicles and culms. Observed in stems and anthers.

Its subcellular location is the peroxisome. The protein resides in the glyoxysome. It is found in the cell membrane. The catalysed reaction is 2 H2O2 = O2 + 2 H2O. With respect to regulation, strongly inhibited by beta-mercaptoethanol, sodium azide and potassium cyanide. Slightly repressed by 3-amino-1,2,4-triazole (3-AT). Activity is repressed proportionally to increased concentration of NaCl, KCl, LiCl and MgCl(2). Occurs in almost all aerobically respiring organisms and serves to protect cells from the toxic effects of hydrogen peroxide. May prevent the excessive accumulation of H(2)O(2) during water stress in response to the accumulation of abscisic acid (ABA). Involved in the modulation of ROS levels related to root growth regulation. Required for pollen viability and floret fertility upon heat stress (HS) by detoxifying reactive oxygen species (ROS) and malondialdehyde (MDA) accumulation in developing anthers exposed to HS. This is Catalase isozyme B (CATB) from Oryza sativa subsp. japonica (Rice).